The sequence spans 753 residues: MSDVKYFEDTEFGLIEAVATIDNGDFGTRTIRFETGQLARQADGAVTTYLDDDTMLLATTTASNQPREGFDFFPLTVDVEERMYAAGRIPGSFFRREGRPSTEAILACRLIDRPLRPTFVKGLRNEVQIVVTVMSMNPEDYYDVVAINGASAATRISGLPVSGAVGGVRMALVVDEKHPEGQWVAFPTHAQHEQSVFEIVVAGRLVERKRGNKTFSDVAVMMVEAGASENVVNRVKDGAPAPTEKIVSDGLEAAKPFIDILCRAQEGLAQRVGNAAKEFPLFPPYTDEVYSAVERKVSKKLASLLTLKAKQERDDATNAYMEEIEAELLPKFEASYSSAAEASKEIRAAYNAVMKSIVRRMILTDHFRIDGRGVTDIRDLAVEVELIPRAHGSSLFERGETQILGVTTLDMLKMEQQIDSLAPGDAKRYMHHYNFPPYSTGETGRVGSPKRREIGHGALAERAVLPVIPSREEFPYSIRQVSEALGSNGSTSMGSVCASTLSLYNAGVPLKAPVAGIAMGLVSGEIDGKTEYVALTDILGAEDAFGDMDFKVAGTADFITALQLDTKLDGIPSKVLSDALEQARDARLTILNTMADVINGPDEMSKFAPRITTVKIPVAKIGELIGPKGKNINALTEETGANISIEDDGTVFISAADGASAEAAIEKINALANPQLPKVGERFLGTVVKTTAFGAFVSLLPGRDGLVHISKLGNGKRVEKVDDVVKVGEKIQVEIADIDNRGKISLVPVAEED.

Asp543 and Asp549 together coordinate Mg(2+). Positions 609-668 constitute a KH domain; sequence PRITTVKIPVAKIGELIGPKGKNINALTEETGANISIEDDGTVFISAADGASAEAAIEKI. One can recognise an S1 motif domain in the interval 680–749; it reads GERFLGTVVK…NRGKISLVPV (70 aa).

The protein belongs to the polyribonucleotide nucleotidyltransferase family. Mg(2+) serves as cofactor.

The protein resides in the cytoplasm. The enzyme catalyses RNA(n+1) + phosphate = RNA(n) + a ribonucleoside 5'-diphosphate. Its function is as follows. Involved in mRNA degradation. Catalyzes the phosphorolysis of single-stranded polyribonucleotides processively in the 3'- to 5'-direction. The protein is Polyribonucleotide nucleotidyltransferase of Corynebacterium glutamicum (strain R).